The following is a 156-amino-acid chain: MEKTFPMTKEGLDKLKAELENLKLVKRPEVIDRIKVARSYGDLSENSEYEAAKDEQAFIEGRISTVETMIRYAEIVDNAKIAKDEVALGKNVTFVEVGETDEESYQIVGTAEADPFTGKISNESPIARVLIGKKVGDIVDVPLPVGEMTVKIVKVD.

The stretch at 2–27 (EKTFPMTKEGLDKLKAELENLKLVKR) forms a coiled coil.

Belongs to the GreA/GreB family.

Its function is as follows. Necessary for efficient RNA polymerase transcription elongation past template-encoded arresting sites. The arresting sites in DNA have the property of trapping a certain fraction of elongating RNA polymerases that pass through, resulting in locked ternary complexes. Cleavage of the nascent transcript by cleavage factors such as GreA or GreB allows the resumption of elongation from the new 3'terminus. GreA releases sequences of 2 to 3 nucleotides. The chain is Transcription elongation factor GreA from Lactococcus lactis subsp. cremoris (strain MG1363).